The following is a 438-amino-acid chain: UDP-N-acetylmuramoylalanine--D-glutamate ligase (438 aa).

112-118 lines the ATP pocket; that stretch reads GSNGKST.

The protein belongs to the MurCDEF family.

Its subcellular location is the cytoplasm. It carries out the reaction UDP-N-acetyl-alpha-D-muramoyl-L-alanine + D-glutamate + ATP = UDP-N-acetyl-alpha-D-muramoyl-L-alanyl-D-glutamate + ADP + phosphate + H(+). It participates in cell wall biogenesis; peptidoglycan biosynthesis. Functionally, cell wall formation. Catalyzes the addition of glutamate to the nucleotide precursor UDP-N-acetylmuramoyl-L-alanine (UMA). The polypeptide is UDP-N-acetylmuramoylalanine--D-glutamate ligase (Escherichia coli O6:K15:H31 (strain 536 / UPEC)).